Consider the following 292-residue polypeptide: UPF0725 protein At4g28920 (292 aa).

Positions 1–17 (MSENDSSESDIEMDPEE) are enriched in acidic residues. The disordered stretch occupies residues 1–24 (MSENDSSESDIEMDPEEEKVYRRQ).

This sequence belongs to the UPF0725 (EMB2204) family.

The chain is UPF0725 protein At4g28920 from Arabidopsis thaliana (Mouse-ear cress).